The chain runs to 300 residues: Cation-efflux pump FieF (300 aa).

4 consecutive transmembrane segments (helical) span residues 12-32 (AAIAATAMALALLLIKIFAWW), 39-59 (ILAALVDSLVDIAASLTNLLV), 82-102 (AALAQSMFISGSALFLFLTSI), and 114-134 (PGVGIGVTVIALICTIILVTF). 2 residues coordinate Zn(2+): aspartate 45 and aspartate 49. Histidine 153 and aspartate 157 together coordinate Zn(2+). 2 helical membrane passes run 156–176 (SDVMMNGAILIALGLSWYGWH) and 178–198 (ADALFALGIGIYILYSALRMG).

It belongs to the cation diffusion facilitator (CDF) transporter (TC 2.A.4) family. FieF subfamily. As to quaternary structure, homodimer.

It is found in the cell inner membrane. The catalysed reaction is Zn(2+)(in) + H(+)(out) = Zn(2+)(out) + H(+)(in). It catalyses the reaction Cd(2+)(in) + H(+)(out) = Cd(2+)(out) + H(+)(in). The enzyme catalyses Fe(2+)(in) + H(+)(out) = Fe(2+)(out) + H(+)(in). In terms of biological role, divalent metal cation transporter which exports Zn(2+), Cd(2+) and possibly Fe(2+). May be involved in zinc and iron detoxification by efflux. The protein is Cation-efflux pump FieF of Salmonella arizonae (strain ATCC BAA-731 / CDC346-86 / RSK2980).